Reading from the N-terminus, the 293-residue chain is Ribosomal RNA small subunit methyltransferase A (293 aa).

Asparagine 38, valine 40, glycine 65, glutamate 86, aspartate 116, and asparagine 133 together coordinate S-adenosyl-L-methionine.

The protein belongs to the class I-like SAM-binding methyltransferase superfamily. rRNA adenine N(6)-methyltransferase family. RsmA subfamily.

It is found in the cytoplasm. It carries out the reaction adenosine(1518)/adenosine(1519) in 16S rRNA + 4 S-adenosyl-L-methionine = N(6)-dimethyladenosine(1518)/N(6)-dimethyladenosine(1519) in 16S rRNA + 4 S-adenosyl-L-homocysteine + 4 H(+). In terms of biological role, specifically dimethylates two adjacent adenosines (A1518 and A1519) in the loop of a conserved hairpin near the 3'-end of 16S rRNA in the 30S particle. May play a critical role in biogenesis of 30S subunits. In Paenarthrobacter aurescens (strain TC1), this protein is Ribosomal RNA small subunit methyltransferase A.